Reading from the N-terminus, the 311-residue chain is Probable deoxyhypusine synthase (311 aa).

The Nucleophile role is filled by lysine 284.

It belongs to the deoxyhypusine synthase family. NAD(+) serves as cofactor.

It carries out the reaction [eIF5A protein]-L-lysine + spermidine = [eIF5A protein]-deoxyhypusine + propane-1,3-diamine. Its pathway is protein modification; eIF5A hypusination. Its function is as follows. Catalyzes the NAD-dependent oxidative cleavage of spermidine and the subsequent transfer of the butylamine moiety of spermidine to the epsilon-amino group of a specific lysine residue of the eIF-5A precursor protein to form the intermediate deoxyhypusine residue. This is Probable deoxyhypusine synthase from Picrophilus torridus (strain ATCC 700027 / DSM 9790 / JCM 10055 / NBRC 100828 / KAW 2/3).